Here is a 1066-residue protein sequence, read N- to C-terminus: Thyrotropin-releasing hormone-degrading ectoenzyme (1066 aa).

A compositionally biased stretch (basic and acidic residues) spans 1 to 14; sequence MALDGERGEQEEEK. Positions 1 to 43 are disordered; that stretch reads MALDGERGEQEEEKKKKKKKKKRKKKEEEGAEKSSSPFAATMG. Over 1–81 the chain is Cytoplasmic; the sequence is MALDGERGEQ…ERHIAVHKRL (81 aa). Positions 15 to 25 are enriched in basic residues; the sequence is KKKKKKKKRKK. Thr71 carries the phosphothreonine; by PKC modification. A helical; Signal-anchor for type II membrane protein membrane pass occupies residues 82-102; that stretch reads VLAFAVSIVALLAVTMLAVLL. Topologically, residues 103–1066 are extracellular; the sequence is SLRFDECGAS…FQWLGKAMRH (964 aa). The disordered stretch occupies residues 118-176; it reads TDGGLGGFPERDSNSSFPGSARRNHHAGGESSQRESGEVGTPGTPSAQPPSEEEREQWQ. 5 N-linked (GlcNAc...) asparagine glycosylation sites follow: Asn131, Asn202, Asn217, Asn264, and Asn380. 446–450 is a substrate binding site; that stretch reads AAMEN. His482 contacts Zn(2+). The active-site Proton acceptor is Glu483. The Zn(2+) site is built by His486 and Glu505. N-linked (GlcNAc...) asparagine glycosylation is found at Asn647, Asn676, Asn691, Asn705, Asn726, Asn842, and Asn948.

This sequence belongs to the peptidase M1 family. In terms of assembly, homodimer; disulfide-linked. The cofactor is Zn(2+).

Its subcellular location is the membrane. It catalyses the reaction Release of the N-terminal pyroglutamyl group from pGlu-|-His-Xaa tripeptides and pGlu-|-His-Xaa-Gly tetrapeptides.. In terms of biological role, specific inactivation of TRH after its release. This Mus musculus (Mouse) protein is Thyrotropin-releasing hormone-degrading ectoenzyme (Trhde).